The primary structure comprises 360 residues: Protein Wnt-5b (360 aa).

Positions 1–16 (MTPILRLLLLSSLLSC) are cleaved as a signal peptide. Cysteine 84 and cysteine 95 are disulfide-bonded. Asparagine 94 and asparagine 100 each carry an N-linked (GlcNAc...) asparagine glycan. Intrachain disulfides connect cysteine 134-cysteine 142, cysteine 144-cysteine 162, cysteine 218-cysteine 232, cysteine 220-cysteine 227, cysteine 289-cysteine 320, cysteine 305-cysteine 315, cysteine 319-cysteine 359, cysteine 335-cysteine 350, cysteine 337-cysteine 347, and cysteine 342-cysteine 343. Serine 224 carries the O-palmitoleoyl serine; by PORCN lipid modification. Asparagine 292 and asparagine 306 each carry an N-linked (GlcNAc...) asparagine glycan.

This sequence belongs to the Wnt family. In terms of processing, palmitoleoylation is required for efficient binding to frizzled receptors. Depalmitoleoylation leads to Wnt signaling pathway inhibition.

The protein localises to the secreted. Its subcellular location is the extracellular space. It is found in the extracellular matrix. In terms of biological role, ligand for members of the frizzled family of seven transmembrane receptors. Probable developmental protein. May be a signaling molecule which affects the development of discrete regions of tissues. Is likely to signal over only few cell diameters. This is Protein Wnt-5b (wnt5b) from Xenopus laevis (African clawed frog).